A 98-amino-acid chain; its full sequence is Cysteine-rich and transmembrane domain-containing protein WIH2 (98 aa).

The interval 1–77 (MSQYNQPPVG…PPQHQQQQSS (77 aa)) is disordered. A compositionally biased stretch (pro residues) spans 9–21 (VGVPPPQGYPPEG). Over residues 37-55 (YPQQGYPPQGYPQQGYPQQ) the composition is skewed to low complexity. The segment covering 56-70 (GYPPPYAPQYPPPPQ) has biased composition (pro residues). Residues 75 to 92 (QSSPGFLEGCLAALCCCC) traverse the membrane as a helical segment.

The protein belongs to the CYSTM1 family. As to expression, expressed in floral organ primordia.

Its subcellular location is the membrane. Its function is as follows. Required for the promotion of megasporogenesis, or promotion of germ cell formation from somatic precursor cells. Acts redundantly with WIH1. Functions in a genetic pathway downstream of SPL/NZZ and WUS and together with TRN2 in promoting megasporogenesis. This Arabidopsis thaliana (Mouse-ear cress) protein is Cysteine-rich and transmembrane domain-containing protein WIH2.